A 213-amino-acid chain; its full sequence is Heterochromatin protein 1 (213 aa).

Disordered stretches follow at residues 1–24 (MGKKTDNPETNNASSGAEEEEEEY) and 74–151 (RKDE…TGFD). The Chromo 1 domain occupies 24-82 (YAVEKILDRRVRKGKVEYYLKWKGYAETENTWEPEGNLDCQDLIQQYELSRKDEANAAA). The segment covering 89-104 (SKKERPGSSTKVKETG) has biased composition (basic and acidic residues). Over residues 105–115 (RTSTTASNSSG) the composition is skewed to polar residues. Positions 154-212 (LEAEKILGASDNNGRLTFLIQFKGVDQAEMVPSTVANVKIPQMVIRFYEERLSWYSDNE) constitute a Chromo 2 domain.

The protein resides in the nucleus. In terms of biological role, structural component of heterochromatin, involved in gene repression and the modification of position-effect-variegation. Recognizes and binds histone H3 tails methylated at 'Lys-9', leading to epigenetic repression. This Drosophila virilis (Fruit fly) protein is Heterochromatin protein 1 (HP1A).